A 98-amino-acid polypeptide reads, in one-letter code: MHRVPRLTTPWANRDLQRAWEKTYQDHRKKVQNAQPLVDTHPPQIYSHLCLKFKKLKMEEERLSIIDRNNYLLLQRVASAMKTRGQTDGRNNFTQRRS.

The protein belongs to the CFAP97 family. As to expression, expressed in a number of tissues including brain, thymus, lung, heart, liver, spleen, kidney and testis.

This is an uncharacterized protein from Mus musculus (Mouse).